A 731-amino-acid polypeptide reads, in one-letter code: Radial spoke head 10 homolog B (731 aa).

The interval methionine 1 to histidine 69 is disordered. Over residues methionine 7 to proline 17 the composition is skewed to polar residues. Low complexity-rich tracts occupy residues threonine 18–valine 36 and serine 46–serine 57. MORN repeat units follow at residues tyrosine 86 to valine 108, tyrosine 109 to lysine 131, tyrosine 132 to threonine 154, tyrosine 155 to threonine 177, tyrosine 179 to threonine 201, tyrosine 204 to valine 226, tyrosine 227 to glutamine 249, tyrosine 251 to alanine 273, tyrosine 284 to leucine 306, and tyrosine 307 to valine 329. 2 disordered regions span residues threonine 353–glycine 377 and lysine 709–histidine 731. Over residues serine 363–glycine 377 the composition is skewed to low complexity. The span at valine 722 to histidine 731 shows a compositional bias: polar residues.

The protein resides in the cytoplasm. It is found in the cytoskeleton. Its subcellular location is the cilium axoneme. The protein localises to the cell projection. It localises to the cilium. The protein resides in the flagellum. May function as part of axonemal radial spoke complexes. Radial spoke complexes are important for ciliary motility. This is Radial spoke head 10 homolog B (rsph10b) from Danio rerio (Zebrafish).